The chain runs to 381 residues: Cytosolic acyl coenzyme A thioester hydrolase (381 aa).

The region spanning L51–K169 is the HotDog ACOT-type 1 domain. Residue N67 is part of the active site. N6-acetyllysine is present on residues K169 and K199. The region spanning S225–E339 is the HotDog ACOT-type 2 domain. D256 is a catalytic residue. At K284 the chain carries N6-acetyllysine. Residues P342–P381 are disordered. Positions D354–G364 are enriched in basic and acidic residues.

In terms of assembly, homohexamer. In terms of tissue distribution, widely expressed with highest levels in brain. High levels also found in thymus, large intestine and testis. Negligible in muscle and adipose tissue. In the central and peripheral nervous systems, displays a predominantly neuronal localization with highest expression in cell bodies and neurites.

The protein resides in the cytoplasm. It localises to the cytosol. The enzyme catalyses hexadecanoyl-CoA + H2O = hexadecanoate + CoA + H(+). It catalyses the reaction dodecanoyl-CoA + H2O = dodecanoate + CoA + H(+). It carries out the reaction tetradecanoyl-CoA + H2O = tetradecanoate + CoA + H(+). The catalysed reaction is decanoyl-CoA + H2O = decanoate + CoA + H(+). The enzyme catalyses octanoyl-CoA + H2O = octanoate + CoA + H(+). It catalyses the reaction octadecanoyl-CoA + H2O = octadecanoate + CoA + H(+). It carries out the reaction (9Z)-octadecenoyl-CoA + H2O = (9Z)-octadecenoate + CoA + H(+). It functions in the pathway lipid metabolism; fatty acid metabolism. Catalyzes the hydrolysis of acyl-CoAs into free fatty acids and coenzyme A (CoASH), regulating their respective intracellular levels. Preferentially hydrolyzes palmitoyl-CoA, but has a broad specificity acting on other fatty acyl-CoAs with chain-lengths of C8-C18. May play an important physiological function in brain. The protein is Cytosolic acyl coenzyme A thioester hydrolase (Acot7) of Mus musculus (Mouse).